Reading from the N-terminus, the 502-residue chain is Keratin, type II microfibrillar, component 5 (502 aa).

S1 is modified (blocked amino end (Ser)). Residues 1–122 (SCRSYRISPG…PNAQCVKHQE (122 aa)) form a head region. Residues 122–433 (EKEQIKNLNS…RLLEGEEQRL (312 aa)) form the IF rod domain. Residues 123–157 (KEQIKNLNSRFAAFIDKVRFLEQQNKLLETKWQFY) are coil 1A. The linker 1 stretch occupies residues 158–167 (QNQRCCESNL). Positions 168–268 (EPLFNGYIET…YDEEIQILNA (101 aa)) are coil 1B. Residue K228 forms a Glycyl lysine isopeptide (Lys-Gly) (interchain with G-Cter in SUMO1) linkage. The linker 12 stretch occupies residues 269 to 285 (HISDTSVIVKMDNSRDL). Residues 286 to 429 (NMDCVVAEIK…ATYRRLLEGE (144 aa)) form a coil 2 region. Positions 430 to 502 (EQRLCEGVGS…CGSSRSVRFA (73 aa)) are tail.

Belongs to the intermediate filament family. In terms of tissue distribution, hard keratin wool.

In terms of biological role, wool microfibrillar keratin. The polypeptide is Keratin, type II microfibrillar, component 5 (Ovis aries (Sheep)).